The sequence spans 421 residues: Fusaric acid cluster transcription factor FUB10 (421 aa).

The segment at residues 16–47 is a DNA-binding region (zn(2)-C6 fungal-type); that stretch reads CDRCRAQKLRCHRDSGHSTDACLRCLKSGIEC. Residues 50 to 92 are disordered; it reads SKARPTGRPPSRQVQPTVVVEQGDTSSSSHTTDSSPSAGGTDM. Low complexity predominate over residues 74–86; the sequence is TSSSSHTTDSSPS.

It localises to the nucleus. Its function is as follows. Transcription factor that regulates the expression of the gene cluster that mediates the biosynthesis of fusaric acid, a mycotoxin with low to moderate toxicity to animals and humans, but with high phytotoxic properties. This chain is Fusaric acid cluster transcription factor FUB10, found in Gibberella moniliformis (strain M3125 / FGSC 7600) (Maize ear and stalk rot fungus).